The chain runs to 218 residues: Very-long-chain (3R)-3-hydroxyacyl-CoA dehydratase hpo-8 (218 aa).

Transmembrane regions (helical) follow at residues 15-35 (ILGW…GLTW), 44-64 (FELK…IVGL), 86-106 (ILHL…LVAW), 137-157 (LFYV…FASL), and 176-196 (MGIS…PGFP). Residues Tyr-142 and Glu-149 contribute to the active site.

Belongs to the very long-chain fatty acids dehydratase HACD family.

Its subcellular location is the membrane. The catalysed reaction is a very-long-chain (3R)-3-hydroxyacyl-CoA = a very-long-chain (2E)-enoyl-CoA + H2O. The protein operates within lipid metabolism; fatty acid biosynthesis. Functionally, catalyzes the third of the four reactions of the long-chain fatty acids elongation cycle. This endoplasmic reticulum-bound enzymatic process, allows the addition of two carbons to the chain of long- and very long-chain fatty acids/VLCFAs per cycle. This enzyme catalyzes the dehydration of the 3-hydroxyacyl-CoA intermediate into trans-2,3-enoyl-CoA, within each cycle of fatty acid elongation. Thereby, it participates in the production of VLCFAs of different chain lengths that are involved in multiple biological processes as precursors of membrane lipids and lipid mediators. The protein is Very-long-chain (3R)-3-hydroxyacyl-CoA dehydratase hpo-8 (hpo-8) of Caenorhabditis elegans.